A 106-amino-acid polypeptide reads, in one-letter code: Large ribosomal subunit protein uL24 (106 aa).

It belongs to the universal ribosomal protein uL24 family. Part of the 50S ribosomal subunit.

Its function is as follows. One of two assembly initiator proteins, it binds directly to the 5'-end of the 23S rRNA, where it nucleates assembly of the 50S subunit. One of the proteins that surrounds the polypeptide exit tunnel on the outside of the subunit. The protein is Large ribosomal subunit protein uL24 of Polaromonas naphthalenivorans (strain CJ2).